Here is a 373-residue protein sequence, read N- to C-terminus: Beta sliding clamp homolog GriR (373 aa).

Belongs to the beta sliding clamp family. Forms a ring-shaped head-to-tail homodimer around DNA which binds and tethers DNA polymerases and other proteins to the DNA. The DNA replisome complex has a single clamp-loading complex (3 tau and 1 each of delta, delta', psi and chi subunits) which binds 3 Pol III cores (1 core on the leading strand and 2 on the lagging strand) each with a beta sliding clamp dimer. Additional proteins in the replisome are other copies of gamma, psi and chi, Ssb, DNA helicase and RNA primase.

Its subcellular location is the cytoplasm. Its function is as follows. A homolog of the beta sliding clamp protein encoded within the biosynthetic cluster for griselimycin synthesis. Upon expression in S.coelicolor A3(2), which is susceptible to this antibiotic, confers resistance to griselimycin. The beta sliding clamp confers DNA tethering and processivity to DNA polymerases and other proteins. Acts as a clamp, forming a ring around DNA (a reaction catalyzed by the clamp-loading complex) which diffuses in an ATP-independent manner freely and bidirectionally along dsDNA. Initially characterized for its ability to contact the catalytic subunit of DNA polymerase III (Pol III), a complex, multichain enzyme responsible for most of the replicative synthesis in bacteria; Pol III exhibits 3'-5' exonuclease proofreading activity. The beta chain is required for initiation of replication as well as for processivity of DNA replication. The polypeptide is Beta sliding clamp homolog GriR (Streptomyces muensis).